Reading from the N-terminus, the 156-residue chain is Putative HTH-type transcriptional regulator YwgB (156 aa).

Residues 2 to 133 (KMKSGMEQAV…REESLQHVMD (132 aa)) enclose the HTH rrf2-type domain.

The protein is Putative HTH-type transcriptional regulator YwgB (ywgB) of Bacillus subtilis (strain 168).